Reading from the N-terminus, the 340-residue chain is Extracellular matrix protein-binding protein emp (340 aa).

A signal peptide spans 1–26; that stretch reads MKKKLLVLTMSTLFATQLINSNHAKA.

It is found in the cell surface. Functionally, adhesin that binds to the host cell extracellular matrix proteins fibronectin, fibrinogen, collagen, and vitronectin. This Staphylococcus aureus (strain Mu50 / ATCC 700699) protein is Extracellular matrix protein-binding protein emp (emp).